Reading from the N-terminus, the 833-residue chain is Piwi-like protein 2 (833 aa).

A PAZ domain is found at 227–353; that stretch reads RINRVLNDNS…IPGELCFLCG (127 aa). The tract at residues 313–338 is disordered; the sequence is PMRRERKKKDEEGVEKEKEKEAPEEK. The span at 320 to 338 shows a compositional bias: basic and acidic residues; the sequence is KKDEEGVEKEKEKEAPEEK. The Piwi domain occupies 515–815; it reads KMALVFVPDD…LAELVGKVHK (301 aa).

This sequence belongs to the argonaute family. Piwi subfamily. Expressed in dividing adult stem cells.

Functionally, required for the production of functional progeny from adult somatic stem cells (neoblasts). The sequence is that of Piwi-like protein 2 (wi-2) from Schmidtea mediterranea (Freshwater planarian flatworm).